A 357-amino-acid chain; its full sequence is Geranylgeranyl pyrophosphate synthase 11, chloroplastic (357 aa).

A chloroplast-targeting transit peptide spans 1 to 37 (MATTLSSSSLFIQFRGRRYNSLSSFNNLQKRTVLSLS). Isopentenyl diphosphate contacts are provided by lysine 103, arginine 106, and histidine 135. Mg(2+) is bound by residues aspartate 142 and aspartate 148. A dimethylallyl diphosphate-binding site is contributed by arginine 153. Arginine 154 lines the isopentenyl diphosphate pocket. Positions 242, 243, 280, 297, and 307 each coordinate dimethylallyl diphosphate.

The protein belongs to the FPP/GGPP synthase family. In terms of assembly, monomer. It depends on Mg(2+) as a cofactor.

The protein localises to the plastid. It localises to the chloroplast. The catalysed reaction is isopentenyl diphosphate + dimethylallyl diphosphate = (2E)-geranyl diphosphate + diphosphate. It catalyses the reaction isopentenyl diphosphate + (2E)-geranyl diphosphate = (2E,6E)-farnesyl diphosphate + diphosphate. It carries out the reaction isopentenyl diphosphate + (2E,6E)-farnesyl diphosphate = (2E,6E,10E)-geranylgeranyl diphosphate + diphosphate. It functions in the pathway isoprenoid biosynthesis; farnesyl diphosphate biosynthesis; farnesyl diphosphate from geranyl diphosphate and isopentenyl diphosphate: step 1/1. Its pathway is isoprenoid biosynthesis; geranyl diphosphate biosynthesis; geranyl diphosphate from dimethylallyl diphosphate and isopentenyl diphosphate: step 1/1. It participates in isoprenoid biosynthesis; geranylgeranyl diphosphate biosynthesis; geranylgeranyl diphosphate from farnesyl diphosphate and isopentenyl diphosphate: step 1/1. Functionally, catalyzes the trans-addition of the three molecules of IPP onto DMAPP to form geranylgeranyl pyrophosphate. This is Geranylgeranyl pyrophosphate synthase 11, chloroplastic from Arabidopsis thaliana (Mouse-ear cress).